Consider the following 391-residue polypeptide: Ribonucleoside-diphosphate reductase small chain (391 aa).

D135, E166, and H169 together coordinate Fe cation. Y173 is an active-site residue. The Fe cation site is built by E229, E263, and H266.

It belongs to the ribonucleoside diphosphate reductase small chain family. As to quaternary structure, heterodimer of a large and a small subunit. It depends on Fe cation as a cofactor.

It localises to the nucleus. The protein localises to the cytoplasm. It carries out the reaction a 2'-deoxyribonucleoside 5'-diphosphate + [thioredoxin]-disulfide + H2O = a ribonucleoside 5'-diphosphate + [thioredoxin]-dithiol. Functionally, provides the precursors necessary for DNA synthesis. Catalyzes the biosynthesis of deoxyribonucleotides from the corresponding ribonucleotides. This chain is Ribonucleoside-diphosphate reductase small chain (suc22), found in Schizosaccharomyces pombe (strain 972 / ATCC 24843) (Fission yeast).